The sequence spans 290 residues: 4-hydroxybenzoate octaprenyltransferase (290 aa).

Transmembrane regions (helical) follow at residues 41-61 (WPLL…GCAM), 89-109 (WEAV…IQPL), 133-153 (FFAI…PMAF), 158-178 (DTVP…SVAY), 202-224 (FGRF…YVWI), and 269-289 (WLGG…GTAG).

This sequence belongs to the UbiA prenyltransferase family. Mg(2+) is required as a cofactor.

The protein localises to the cell inner membrane. It carries out the reaction all-trans-octaprenyl diphosphate + 4-hydroxybenzoate = 4-hydroxy-3-(all-trans-octaprenyl)benzoate + diphosphate. It functions in the pathway cofactor biosynthesis; ubiquinone biosynthesis. Catalyzes the prenylation of para-hydroxybenzoate (PHB) with an all-trans polyprenyl group. Mediates the second step in the final reaction sequence of ubiquinone-8 (UQ-8) biosynthesis, which is the condensation of the polyisoprenoid side chain with PHB, generating the first membrane-bound Q intermediate 3-octaprenyl-4-hydroxybenzoate. The polypeptide is 4-hydroxybenzoate octaprenyltransferase (Burkholderia ambifaria (strain ATCC BAA-244 / DSM 16087 / CCUG 44356 / LMG 19182 / AMMD) (Burkholderia cepacia (strain AMMD))).